Consider the following 219-residue polypeptide: PKHD-type hydroxylase AM1_3707 (219 aa).

The Fe2OG dioxygenase domain maps to 78-172 (SIHTLLFSRY…RLVAVGWVQS (95 aa)). Residues His96, Asp98, and His153 each contribute to the Fe cation site. Arg163 is a 2-oxoglutarate binding site.

Fe(2+) serves as cofactor. L-ascorbate is required as a cofactor.

This is PKHD-type hydroxylase AM1_3707 from Acaryochloris marina (strain MBIC 11017).